The primary structure comprises 310 residues: Aspartate carbamoyltransferase catalytic subunit (310 aa).

Carbamoyl phosphate-binding residues include R55 and T56. Residue K83 coordinates L-aspartate. Positions 105, 133, and 136 each coordinate carbamoyl phosphate. L-aspartate is bound by residues R166 and R220. Carbamoyl phosphate-binding residues include G261 and P262.

Belongs to the aspartate/ornithine carbamoyltransferase superfamily. ATCase family. Heterododecamer (2C3:3R2) of six catalytic PyrB chains organized as two trimers (C3), and six regulatory PyrI chains organized as three dimers (R2).

It catalyses the reaction carbamoyl phosphate + L-aspartate = N-carbamoyl-L-aspartate + phosphate + H(+). The protein operates within pyrimidine metabolism; UMP biosynthesis via de novo pathway; (S)-dihydroorotate from bicarbonate: step 2/3. Its function is as follows. Catalyzes the condensation of carbamoyl phosphate and aspartate to form carbamoyl aspartate and inorganic phosphate, the committed step in the de novo pyrimidine nucleotide biosynthesis pathway. This chain is Aspartate carbamoyltransferase catalytic subunit, found in Chlorobium phaeovibrioides (strain DSM 265 / 1930) (Prosthecochloris vibrioformis (strain DSM 265)).